A 175-amino-acid chain; its full sequence is Ribosome maturation factor RimM (175 aa).

The 81-residue stretch at glutamate 95–phenylalanine 175 folds into the PRC barrel domain.

The protein belongs to the RimM family. Binds ribosomal protein uS19.

The protein resides in the cytoplasm. Its function is as follows. An accessory protein needed during the final step in the assembly of 30S ribosomal subunit, possibly for assembly of the head region. Essential for efficient processing of 16S rRNA. May be needed both before and after RbfA during the maturation of 16S rRNA. It has affinity for free ribosomal 30S subunits but not for 70S ribosomes. The polypeptide is Ribosome maturation factor RimM (Glaesserella parasuis serovar 5 (strain SH0165) (Haemophilus parasuis)).